The following is a 278-amino-acid chain: Inositol oxygenase (278 aa).

Residues Arg-22 and 78-80 (DES) contribute to the substrate site. Positions 91, 116, and 117 each coordinate Fe cation. Substrate is bound by residues Lys-120 and 134 to 135 (GD). Residues His-187, His-213, and Asp-246 each coordinate Fe cation. Residue 213–214 (HS) participates in substrate binding.

It belongs to the myo-inositol oxygenase family. The cofactor is Fe cation.

The protein resides in the cytoplasm. The enzyme catalyses myo-inositol + O2 = D-glucuronate + H2O + H(+). Its pathway is polyol metabolism; myo-inositol degradation into D-glucuronate; D-glucuronate from myo-inositol: step 1/1. This Danio rerio (Zebrafish) protein is Inositol oxygenase (miox).